A 118-amino-acid polypeptide reads, in one-letter code: Cytochrome b-c1 complex subunit 7 (118 aa).

The segment at 1-32 (MVHLTKTLRFINNPGFRKFYYGLQGYNKYGLY) is igE-binding. Immunodominant epitope; induces specific IgE antibody production in mice. Causes degranulation of rat basophilic leukemia (RBL) cells and the release of beta-hexosaminidase from them.

This sequence belongs to the UQCRB/QCR7 family. Component of the ubiquinol-cytochrome c oxidoreductase (cytochrome b-c1 complex, complex III, CIII), a multisubunit enzyme composed of 3 respiratory subunits cytochrome b, cytochrome c1 and Rieske protein, 2 core protein subunits, and additional low-molecular weight protein subunits. The complex exists as an obligatory dimer and forms supercomplexes (SCs) in the inner mitochondrial membrane with cytochrome c oxidase (complex IV, CIV).

It is found in the mitochondrion inner membrane. In terms of biological role, component of the ubiquinol-cytochrome c oxidoreductase, a multisubunit transmembrane complex that is part of the mitochondrial electron transport chain which drives oxidative phosphorylation. The respiratory chain contains 3 multisubunit complexes succinate dehydrogenase (complex II, CII), ubiquinol-cytochrome c oxidoreductase (cytochrome b-c1 complex, complex III, CIII) and cytochrome c oxidase (complex IV, CIV), that cooperate to transfer electrons derived from NADH and succinate to molecular oxygen, creating an electrochemical gradient over the inner membrane that drives transmembrane transport and the ATP synthase. The cytochrome b-c1 complex catalyzes electron transfer from ubiquinol to cytochrome c, linking this redox reaction to translocation of protons across the mitochondrial inner membrane, with protons being carried across the membrane as hydrogens on the quinol. In the process called Q cycle, 2 protons are consumed from the matrix, 4 protons are released into the intermembrane space and 2 electrons are passed to cytochrome c. This is Cytochrome b-c1 complex subunit 7 from Dermatophagoides pteronyssinus (European house dust mite).